The sequence spans 361 residues: Probable U3 small nucleolar RNA-associated protein 11 (361 aa).

4 disordered regions span residues 1–52 (MTKG…KKRK), 200–235 (LMSG…TPET), 262–295 (KRES…TRLL), and 311–361 (RHVR…RRAR). A compositionally biased stretch (basic residues) spans 17–33 (HLKRKTHLERSQPKSRQ). Composition is skewed to basic and acidic residues over residues 37–46 (QLEKHKDHVL) and 217–228 (RREVQEKMRRSG). The span at 278–287 (DDGEQEEAAA) shows a compositional bias: acidic residues. The segment covering 342-352 (RQMEQRRESRF) has biased composition (basic and acidic residues).

It belongs to the UTP11 family. In terms of assembly, component of the ribosomal small subunit (SSU) processome.

It localises to the nucleus. The protein resides in the nucleolus. In terms of biological role, involved in nucleolar processing of pre-18S ribosomal RNA. This is Probable U3 small nucleolar RNA-associated protein 11 from Leishmania major.